The chain runs to 444 residues: RAC family serine/threonine-protein kinase homolog (444 aa).

A PH domain is found at 5-100 (PIKHEGFLTK…WIEILINERE (96 aa)). One can recognise a Protein kinase domain in the interval 120–374 (FELLNLVGKG…PNLIKRHPFF (255 aa)). Residues 126–134 (VGKGSFGKV) and K149 each bind ATP. The active-site Proton acceptor is D243. At T278 the chain carries Phosphothreonine. Positions 375-444 (RSIDWEQLFQ…TYVAESEHLR (70 aa)) constitute an AGC-kinase C-terminal domain.

Belongs to the protein kinase superfamily. AGC Ser/Thr protein kinase family. RAC subfamily.

It catalyses the reaction L-seryl-[protein] + ATP = O-phospho-L-seryl-[protein] + ADP + H(+). It carries out the reaction L-threonyl-[protein] + ATP = O-phospho-L-threonyl-[protein] + ADP + H(+). Predominantly involved during the aggregation to control cell polarity and chemotaxis. Phosphorylates talB, gefN, gefS, PI4P 5-kinase and gacQ. This chain is RAC family serine/threonine-protein kinase homolog (pkbA), found in Dictyostelium discoideum (Social amoeba).